Reading from the N-terminus, the 294-residue chain is MLITDIINQASSQLREAGIETPEHDAKLLLAEAAGVELRDVDRALLMGEELGTTGQLAVFRAMLDRRAKREPLQYITGHAPFRYLDLKVGPGVFIPRPETETVVQAGLDWLTKNGMIHPCVVDLCAGSGAIGLSVVSEVPGSQVWAVELSPNTAEWTRRNLSETAKKYPSIASNYHLEIADATSFATLAQLDGTVDIVITNPPYVPQTDIPEQPEVRDWDPELALYGGSMDGTLIPERIIERACRLLKPGGVLVMEHDVTQGDRLVAFARATGFAAASTGQDWTGRDRYLFAVS.

S-adenosyl-L-methionine-binding residues include E148 and N201. 201-204 (NPPY) is a binding site for substrate.

Belongs to the protein N5-glutamine methyltransferase family. PrmC subfamily.

It carries out the reaction L-glutaminyl-[peptide chain release factor] + S-adenosyl-L-methionine = N(5)-methyl-L-glutaminyl-[peptide chain release factor] + S-adenosyl-L-homocysteine + H(+). Methylates the class 1 translation termination release factors RF1/PrfA and RF2/PrfB on the glutamine residue of the universally conserved GGQ motif. The protein is Release factor glutamine methyltransferase of Bifidobacterium longum (strain NCC 2705).